We begin with the raw amino-acid sequence, 313 residues long: Protein FixB (313 aa).

Residue Leu-255–Asp-283 coordinates FAD.

This sequence belongs to the ETF alpha-subunit/FixB family. Heterodimer of FixA and FixB.

It participates in amine and polyamine metabolism; carnitine metabolism. Required for anaerobic carnitine reduction. May bring reductant to CaiA. This is Protein FixB from Escherichia coli O7:K1 (strain IAI39 / ExPEC).